The chain runs to 515 residues: Glycosyltransferase family 92 protein F59C6.8 (515 aa).

A helical membrane pass occupies residues 18 to 38 (LFIFIAVCLGFLIAVTILAGL). The 294-residue stretch at 163–456 (RKVVACFSPL…IEVCYNRIFY (294 aa)) folds into the GT92 domain.

It belongs to the glycosyltransferase 92 family.

The protein resides in the membrane. The sequence is that of Glycosyltransferase family 92 protein F59C6.8 from Caenorhabditis elegans.